We begin with the raw amino-acid sequence, 500 residues long: Trehalose-6-phosphate synthase (500 aa).

Residue arginine 28 participates in D-glucose 6-phosphate binding. A UDP-alpha-D-glucose-binding site is contributed by 48 to 49 (GG). Residues tyrosine 104 and aspartate 158 each coordinate D-glucose 6-phosphate. UDP-alpha-D-glucose contacts are provided by arginine 300 and lysine 305. Arginine 338 contacts D-glucose 6-phosphate. 403–407 (LVAKE) is a binding site for UDP-alpha-D-glucose.

This sequence belongs to the glycosyltransferase 20 family. Homotetramer.

The enzyme catalyses ADP-alpha-D-glucose + D-glucose 6-phosphate = alpha,alpha-trehalose 6-phosphate + ADP + H(+). It carries out the reaction CDP-alpha-D-glucose + D-glucose 6-phosphate = alpha,alpha-trehalose 6-phosphate + CDP + H(+). It catalyses the reaction GDP-alpha-D-glucose + D-glucose 6-phosphate = alpha,alpha-trehalose 6-phosphate + GDP + H(+). The catalysed reaction is TDP-alpha-D-glucose + D-glucose 6-phosphate = 5-methyl-UDP + alpha,alpha-trehalose 6-phosphate + H(+). The enzyme catalyses D-glucose 6-phosphate + UDP-alpha-D-glucose = alpha,alpha-trehalose 6-phosphate + UDP + H(+). It functions in the pathway glycan biosynthesis; trehalose biosynthesis. Its function is as follows. Probably involved in the osmoprotection via the biosynthesis of trehalose and in the production of glycogen and alpha-glucan via the TreS-Pep2 branch involved in the biosynthesis of maltose-1-phosphate (M1P). Catalyzes the transfer of glucose from UDP-glucose (UDP-Glc) to D-glucose 6-phosphate (Glc-6-P) to form trehalose-6-phosphate. Probably also able to use ADP-Glc, CDP-Glc, GDP-Glc and TDP-Glc as glucosyl donors. The sequence is that of Trehalose-6-phosphate synthase from Mycobacterium ulcerans (strain Agy99).